The sequence spans 377 residues: SH2/SH3 adapter protein NCK1 (377 aa).

Residue A2 is modified to N-acetylalanine. In terms of domain architecture, SH3 1 spans 2-61 (AEEVVVVAKFDYVAQQEQELDIKKNERLWLLDDSKSWWRVRNSMNKTGFVPSNYVERKNS). Phosphoserine occurs at positions 85, 89, 91, and 96. Y105 is modified (phosphotyrosine). The region spanning 106–165 (DLNMPAYVKFNYMAEREDELSLIKGTKVIVMEKCSDGWWRGSYNGQVGWFPSNYVTEEGD) is the SH3 2 domain. At S166 the chain carries Phosphoserine. The SH3 3 domain occupies 190–252 (QVLHVVQALY…PKNYVTVMQN (63 aa)). An SH2 domain is found at 282-376 (WYYGKVTRHQ…GEKLYLVKHL (95 aa)).

Interacts (via SH2 domain and SH3 domain 2) with EGFR. Interacts with PAK1 and SOS1. Interacts (via SH3 domains) with PKN2. Associates with BLNK, PLCG1, VAV1 and NCK1 in a B-cell antigen receptor-dependent fashion. Interacts with SOCS7. This interaction is required for nuclear import. Part of a complex containing PPP1R15B, PP1 and NCK1. Interacts with RALGPS1. Interacts with CAV2 (tyrosine phosphorylated form). Interacts with ADAM15. Interacts with FASLG. Directly interacts with RASA1. Interacts with isoform 4 of MINK1. Interacts with FLT1 (tyrosine phosphorylated). Interacts with KDR (tyrosine phosphorylated). Interacts (via SH2 domain) with EPHB1; activates the JUN cascade to regulate cell adhesion. Interacts with EPHA2. Interacts (via SH2 domain) with PDGFRB (tyrosine phosphorylated). Interacts with the inactive form of EIF2AK2/PKR. Interacts with PTPN1. Interacts with INSR/insulin receptor (in response to insulin stimulation); This interaction may mediate PTPN1 recruitment leading to INSR dephosphorylation. Interacts with IRS1. Post-translationally, phosphorylated on Ser and Tyr residues. Phosphorylated in response to activation of EGFR and FcERI. Phosphorylated by activated PDGFRB.

The protein localises to the cytoplasm. The protein resides in the endoplasmic reticulum. It is found in the nucleus. In terms of biological role, adapter protein which associates with tyrosine-phosphorylated growth factor receptors, such as KDR and PDGFRB, or their cellular substrates. Maintains low levels of EIF2S1 phosphorylation by promoting its dephosphorylation by PP1. Plays a role in the DNA damage response, not in the detection of the damage by ATM/ATR, but for efficient activation of downstream effectors, such as that of CHEK2. Plays a role in ELK1-dependent transcriptional activation in response to activated Ras signaling. Modulates the activation of EIF2AK2/PKR by dsRNA. May play a role in cell adhesion and migration through interaction with ephrin receptors. The chain is SH2/SH3 adapter protein NCK1 (NCK1) from Homo sapiens (Human).